The sequence spans 131 residues: Large ribosomal subunit protein bL12 (131 aa).

It belongs to the bacterial ribosomal protein bL12 family. In terms of assembly, homodimer. Part of the ribosomal stalk of the 50S ribosomal subunit. Forms a multimeric L10(L12)X complex, where L10 forms an elongated spine to which 2 to 4 L12 dimers bind in a sequential fashion. Binds GTP-bound translation factors.

Functionally, forms part of the ribosomal stalk which helps the ribosome interact with GTP-bound translation factors. Is thus essential for accurate translation. In Nocardioides sp. (strain ATCC BAA-499 / JS614), this protein is Large ribosomal subunit protein bL12.